We begin with the raw amino-acid sequence, 547 residues long: Phosphoethanolamine transferase EptA (547 aa).

The Cytoplasmic portion of the chain corresponds to 1-9 (MLKRFLKRP). Residues 10 to 30 (VLGQIAWLLLFSFYIAVCLNI) form a helical membrane-spanning segment. Residues 31 to 47 (AFYKQVLQDLPLNSLRN) lie on the Periplasmic side of the membrane. Residues 48-68 (VLVFISMPVVAFSVVNSVLTL) form a helical membrane-spanning segment. The Cytoplasmic segment spans residues 69–79 (ASFIWLNRLLA). A helical membrane pass occupies residues 80–100 (CVFILVGAAAQYFILTYGIII). Topologically, residues 101–123 (DRSMIANMMDTTPAETFALMTPQ) are periplasmic. Residues 124–144 (MVLTLGLSGVLAAVIAFWVKI) traverse the membrane as a helical segment. At 145 to 154 (RPATPRLRSG) the chain is on the cytoplasmic side. A helical membrane pass occupies residues 155–175 (LYRLASVLISILLVILVAAFF). Residues 176–547 (YKDYASLFRN…ILQPCRRLSE (372 aa)) are Periplasmic-facing.

It belongs to the phosphoethanolamine transferase family. EptA subfamily.

It is found in the cell inner membrane. The protein operates within bacterial outer membrane biogenesis; LPS lipid A biosynthesis. Its function is as follows. Catalyzes the addition of a phosphoethanolamine moiety to the lipid A. The phosphoethanolamine modification is required for resistance to polymyxin. The protein is Phosphoethanolamine transferase EptA (eptA) of Salmonella typhimurium (strain LT2 / SGSC1412 / ATCC 700720).